The primary structure comprises 94 residues: Phosphoribosyl-ATP pyrophosphatase (94 aa).

Belongs to the PRA-PH family.

It is found in the cytoplasm. The enzyme catalyses 1-(5-phospho-beta-D-ribosyl)-ATP + H2O = 1-(5-phospho-beta-D-ribosyl)-5'-AMP + diphosphate + H(+). It participates in amino-acid biosynthesis; L-histidine biosynthesis; L-histidine from 5-phospho-alpha-D-ribose 1-diphosphate: step 2/9. The chain is Phosphoribosyl-ATP pyrophosphatase from Pyrobaculum islandicum (strain DSM 4184 / JCM 9189 / GEO3).